A 187-amino-acid chain; its full sequence is uncharacterized protein (187 aa).

Positions 1–28 are cleaved as a signal peptide; that stretch reads MRLHRTNNSRRCTILLILALKIFDFVDT. Residues Asn58, Asn70, Asn156, and Asn168 are each glycosylated (N-linked (GlcNAc...) asparagine).

It is found in the secreted. This is an uncharacterized protein from Caenorhabditis elegans.